A 438-amino-acid polypeptide reads, in one-letter code: Probable glycine dehydrogenase (decarboxylating) subunit 1 (438 aa).

This sequence belongs to the GcvP family. N-terminal subunit subfamily. The glycine cleavage system is composed of four proteins: P, T, L and H. In this organism, the P 'protein' is a heterodimer of two subunits.

It carries out the reaction N(6)-[(R)-lipoyl]-L-lysyl-[glycine-cleavage complex H protein] + glycine + H(+) = N(6)-[(R)-S(8)-aminomethyldihydrolipoyl]-L-lysyl-[glycine-cleavage complex H protein] + CO2. In terms of biological role, the glycine cleavage system catalyzes the degradation of glycine. The P protein binds the alpha-amino group of glycine through its pyridoxal phosphate cofactor; CO(2) is released and the remaining methylamine moiety is then transferred to the lipoamide cofactor of the H protein. This Syntrophomonas wolfei subsp. wolfei (strain DSM 2245B / Goettingen) protein is Probable glycine dehydrogenase (decarboxylating) subunit 1.